A 314-amino-acid polypeptide reads, in one-letter code: Ribosomal RNA small subunit methyltransferase H (314 aa).

Residues 37-39, D57, F83, D105, and Q112 each bind S-adenosyl-L-methionine; that span reads GGH.

It belongs to the methyltransferase superfamily. RsmH family.

It is found in the cytoplasm. The catalysed reaction is cytidine(1402) in 16S rRNA + S-adenosyl-L-methionine = N(4)-methylcytidine(1402) in 16S rRNA + S-adenosyl-L-homocysteine + H(+). Specifically methylates the N4 position of cytidine in position 1402 (C1402) of 16S rRNA. The polypeptide is Ribosomal RNA small subunit methyltransferase H (Thioalkalivibrio sulfidiphilus (strain HL-EbGR7)).